Reading from the N-terminus, the 83-residue chain is Normal mucosa of esophagus-specific gene 1 protein (83 aa).

Belongs to the complex I NDUFA4 subunit family.

It localises to the nucleus. In Rattus norvegicus (Rat), this protein is Normal mucosa of esophagus-specific gene 1 protein (Nmes1).